The primary structure comprises 196 residues: MEPQLILGSSSPRRKSILQYFRIPFTCISPSFEERSVPYQGDPVAYSQELAVGKAESIVQDHNPEGVILTADTVVIYKGKVFNKPGSHDEAIEMLKTLSGQTHSIITSVALLQQKKLMVGQETTQVTFNKLPEEYLGRYVEAFSTLDKCGGYSTQEGGGLIIHNIQGCAYNVQGLPIRTLYHLLLEFDINLWDYLV.

Aspartate 72 (proton acceptor) is an active-site residue.

It belongs to the Maf family. YhdE subfamily. Requires a divalent metal cation as cofactor.

It is found in the cytoplasm. The enzyme catalyses dTTP + H2O = dTMP + diphosphate + H(+). It carries out the reaction UTP + H2O = UMP + diphosphate + H(+). Its function is as follows. Nucleoside triphosphate pyrophosphatase that hydrolyzes dTTP and UTP. May have a dual role in cell division arrest and in preventing the incorporation of modified nucleotides into cellular nucleic acids. This Chlamydia felis (strain Fe/C-56) (Chlamydophila felis) protein is dTTP/UTP pyrophosphatase.